The chain runs to 581 residues: MDSKAVSPLIGFVLMLAIIMGLIGIMQAQWVPVWNKEVEAEHLSKLEFEASEIPKIMFISATTGKQGVASIDAGCEYPNRGFLINPSTASTSLKAIPLSVDVKFNETLPNGSLFRYSNKFTTYAIIVQPNYFYMQKPEIIVEHSAVIKTSGNSALNVSSPVSFSRNKVHLFIVNSTFSSISTPNTLNLQFIPVSYGGDTFVKNASITLKVLDETFDWWNKTLKNIFGAGNVTADGSRKEMTFRLFNTTLSMSYLIVQASIGERAKLNERIEPYRIFATSSNTLSMLKGEQRELNVKVLDIYNNPVRGYSRVSYSVVSGGDKCRIVSASPQTDEKGVFTVTVEAVNSGNCDVEFRIDSINSGFNKTKFSITVIPVSSGGLGGQGYLSFTPASRGLVEIYHGPVNGFIDPTKPPAESPRDLITDPNWEPYALEDKELAAYNDGSWDWWSGEYVPTSGYLEKTQNNAQSKQNSQKNHASQLFEFNVGDVQMSSLKVFWNGIAWLDVQNNRNDGVVLYVWNGTGWEYLCDTTSSSEVWLQCEKRGNYIQNKKVYLLIVQNDWTQTWKGNRDSQIYTDYIELDILT.

Positions 1-28 are cleaved as a signal peptide; it reads MDSKAVSPLIGFVLMLAIIMGLIGIMQA.

This is an uncharacterized protein from Archaeoglobus fulgidus (strain ATCC 49558 / DSM 4304 / JCM 9628 / NBRC 100126 / VC-16).